The following is a 155-amino-acid chain: MALYEHIFIARQDVSQQQVEALTEQFSNIIKEQGGQVGKTEYWGLRNLAFKVKKNRKGHYTLVNIDAPHAAVAEMERQMGISEDVLRFITVRVEEHETEPSAMMQSRGDRGDRGDRRGGDRFGDRDRGDRGDRGSSRFGDRERPRRDDNSDGGQE.

The tract at residues 94–155 is disordered; it reads EEHETEPSAM…RDDNSDGGQE (62 aa). Positions 107 to 149 are enriched in basic and acidic residues; it reads RGDRGDRGDRRGGDRFGDRDRGDRGDRGSSRFGDRERPRRDDN.

The protein belongs to the bacterial ribosomal protein bS6 family.

In terms of biological role, binds together with bS18 to 16S ribosomal RNA. The sequence is that of Small ribosomal subunit protein bS6 from Parvibaculum lavamentivorans (strain DS-1 / DSM 13023 / NCIMB 13966).